The following is a 319-amino-acid chain: Quinolinate synthase (319 aa).

Positions 35 and 52 each coordinate iminosuccinate. Cys97 contributes to the [4Fe-4S] cluster binding site. Iminosuccinate contacts are provided by residues 123–125 (YIN) and Ser140. Cys183 contributes to the [4Fe-4S] cluster binding site. Iminosuccinate contacts are provided by residues 209–211 (HPE) and Thr226. [4Fe-4S] cluster is bound at residue Cys276.

The protein belongs to the quinolinate synthase family. Type 2 subfamily. The cofactor is [4Fe-4S] cluster.

The protein localises to the cytoplasm. The catalysed reaction is iminosuccinate + dihydroxyacetone phosphate = quinolinate + phosphate + 2 H2O + H(+). It functions in the pathway cofactor biosynthesis; NAD(+) biosynthesis; quinolinate from iminoaspartate: step 1/1. Functionally, catalyzes the condensation of iminoaspartate with dihydroxyacetone phosphate to form quinolinate. The protein is Quinolinate synthase of Microcystis aeruginosa (strain NIES-843 / IAM M-2473).